A 1372-amino-acid polypeptide reads, in one-letter code: DNA-directed RNA polymerase subunit beta (1372 aa).

This sequence belongs to the RNA polymerase beta chain family. The RNAP catalytic core consists of 2 alpha, 1 beta, 1 beta' and 1 omega subunit. When a sigma factor is associated with the core the holoenzyme is formed, which can initiate transcription.

The catalysed reaction is RNA(n) + a ribonucleoside 5'-triphosphate = RNA(n+1) + diphosphate. In terms of biological role, DNA-dependent RNA polymerase catalyzes the transcription of DNA into RNA using the four ribonucleoside triphosphates as substrates. In Rickettsia bellii (strain RML369-C), this protein is DNA-directed RNA polymerase subunit beta.